The sequence spans 210 residues: Protein GrpE (210 aa).

Positions 1-42 (MANEERTIPETNVASERPEDPVESQTRAEGGEQIQEAAPETA) are disordered.

Belongs to the GrpE family. As to quaternary structure, homodimer.

The protein localises to the cytoplasm. Participates actively in the response to hyperosmotic and heat shock by preventing the aggregation of stress-denatured proteins, in association with DnaK and GrpE. It is the nucleotide exchange factor for DnaK and may function as a thermosensor. Unfolded proteins bind initially to DnaJ; upon interaction with the DnaJ-bound protein, DnaK hydrolyzes its bound ATP, resulting in the formation of a stable complex. GrpE releases ADP from DnaK; ATP binding to DnaK triggers the release of the substrate protein, thus completing the reaction cycle. Several rounds of ATP-dependent interactions between DnaJ, DnaK and GrpE are required for fully efficient folding. The polypeptide is Protein GrpE (Nitrosococcus oceani (strain ATCC 19707 / BCRC 17464 / JCM 30415 / NCIMB 11848 / C-107)).